Consider the following 213-residue polypeptide: Adenylate kinase (213 aa).

10–15 (GCGKGT) is an ATP binding site. The NMP stretch occupies residues 30 to 59 (STGDLMRKEISLNTRLGLKCQEYMNAGKYV). AMP-binding positions include T31, R36, 57 to 59 (KYV), 83 to 86 (GYPR), and Q90. The LID stretch occupies residues 124–161 (NRLVCPLCKASFNLETRKPKQEGLCDFDNTKLVKRSDD). An ATP-binding site is contributed by R125. Zn(2+) is bound by residues C128 and C131. An ATP-binding site is contributed by 134-135 (SF). Zn(2+)-binding residues include C148 and D151. R158 and R169 together coordinate AMP. D197 serves as a coordination point for ATP.

This sequence belongs to the adenylate kinase family. As to quaternary structure, monomer.

The protein localises to the cytoplasm. It carries out the reaction AMP + ATP = 2 ADP. Its pathway is purine metabolism; AMP biosynthesis via salvage pathway; AMP from ADP: step 1/1. Its function is as follows. Catalyzes the reversible transfer of the terminal phosphate group between ATP and AMP. Plays an important role in cellular energy homeostasis and in adenine nucleotide metabolism. This is Adenylate kinase from Mycoplasma mycoides subsp. mycoides SC (strain CCUG 32753 / NCTC 10114 / PG1).